Reading from the N-terminus, the 198-residue chain is FMN-dependent NADH:quinone oxidoreductase (198 aa).

Residue 92 to 95 participates in FMN binding; sequence MWNL.

This sequence belongs to the azoreductase type 1 family. Homodimer. Requires FMN as cofactor.

The catalysed reaction is 2 a quinone + NADH + H(+) = 2 a 1,4-benzosemiquinone + NAD(+). It catalyses the reaction N,N-dimethyl-1,4-phenylenediamine + anthranilate + 2 NAD(+) = 2-(4-dimethylaminophenyl)diazenylbenzoate + 2 NADH + 2 H(+). Functionally, quinone reductase that provides resistance to thiol-specific stress caused by electrophilic quinones. Its function is as follows. Also exhibits azoreductase activity. Catalyzes the reductive cleavage of the azo bond in aromatic azo compounds to the corresponding amines. The chain is FMN-dependent NADH:quinone oxidoreductase from Lachnoclostridium phytofermentans (strain ATCC 700394 / DSM 18823 / ISDg) (Clostridium phytofermentans).